The sequence spans 797 residues: Hid-1 family protein P27G11.12 (797 aa).

The protein belongs to the hid-1 family.

Its subcellular location is the cytoplasm. It localises to the nucleus. This Schizosaccharomyces pombe (strain 972 / ATCC 24843) (Fission yeast) protein is Hid-1 family protein P27G11.12.